The following is a 328-amino-acid chain: Beta-agarase C (328 aa).

Residues 1–17 form the signal peptide; the sequence is MNLTKMAVFAASLFCLA. Residues 18 to 67 constitute a propeptide that is removed on maturation; that stretch reads CKNDIDTELEKKSIPESEIQKSEEKLPNEEELTPTDPDEETNKEETVTAN. The span at 26 to 45 shows a compositional bias: basic and acidic residues; it reads LEKKSIPESEIQKSEEKLPN. The interval 26 to 61 is disordered; it reads LEKKSIPESEIQKSEEKLPNEEELTPTDPDEETNKE. Over residues 46 to 59 the composition is skewed to acidic residues; sequence EEELTPTDPDEETN. Residues 70-328 form the GH16 domain; it reads YDFTGNTPPP…WIHTYQLVEE (259 aa). Substrate is bound by residues tryptophan 110, 119–129, 133–135, glutamate 188, glutamate 193, and arginine 224; these read KAENSGVSDGK and KAT. Glutamate 188 serves as the catalytic Nucleophile. Residue glutamate 193 is the Proton donor of the active site.

The protein belongs to the glycosyl hydrolase 16 family.

It is found in the secreted. The catalysed reaction is Hydrolysis of (1-&gt;4)-beta-D-galactosidic linkages in agarose, giving the tetramer as the predominant product.. Functionally, cleaves the beta-1,4-linkages between beta-D-galactose and alpha-L-3,6-anhydro-galactose residues in agarose. Cleaves agarose in a random manner with retention of the anomeric-bond configuration, producing beta-anomers that give rise progressively to alpha-anomers when mutarotation takes place. This is Beta-agarase C (agaC) from Zobellia galactanivorans (strain DSM 12802 / CCUG 47099 / CIP 106680 / NCIMB 13871 / Dsij).